The sequence spans 453 residues: Nuclear hormone receptor family member nhr-12 (453 aa).

Residues 1–37 (MEQIPQEQKTEPFLASFTTTEKLGTETPTTSITPNTQ) are disordered. Residues 18 to 36 (TTTEKLGTETPTTSITPNT) are compositionally biased toward low complexity. Positions 44 to 119 (KPNCAVCNEV…VGMNPECVQN (76 aa)) form a DNA-binding region, nuclear receptor. 2 consecutive NR C4-type zinc fingers follow at residues 47-67 (CAVC…CRAC) and 83-107 (CRAG…YDKC). Residues 178-451 (FSPASLPGLS…ENFVNIINGK (274 aa)) form the NR LBD domain.

This sequence belongs to the nuclear hormone receptor family.

The protein localises to the nucleus. Functionally, orphan nuclear receptor. The sequence is that of Nuclear hormone receptor family member nhr-12 (nhr-12) from Caenorhabditis elegans.